We begin with the raw amino-acid sequence, 402 residues long: MFKLTSRLVTSRFAASSRLATARTIVLPRPHPSWISFQAKRFNSTGPNANDVSEIQTQLPSIDELTSSAPSLSASTSDLIANTTQTVGELSSHIGYLNSIGLAQTWYWPSDIIQHVLEAVHVYSGLPWWGTIAATTILIRCLMFPLYVKSSDTVARNSHIKPELDALNNKLMSTTDLQQGQLVAMQRKKLLSSHGIKNRWLAAPMLQIPIALGFFNALRHMANYPVDGFANQGVAWFTDLTQADPYLGLQVITAAVFISFTRLGGETGAQQFSSPMKRLFTILPIISIPATMNLSSAVVLYFAFNGAFSVLQTMILRNKWVRSKLKITEVAKPRTPIAGASPTENMGIFQSLKHNIQKARDQAERRQLMQDNEKKLQESFKEKRQNSKIKIVHKSNFINNKK.

Residues 1–42 constitute a mitochondrion transit peptide; it reads MFKLTSRLVTSRFAASSRLATARTIVLPRPHPSWISFQAKRF. At 43-118 the chain is on the mitochondrial intermembrane side; it reads NSTGPNANDV…PSDIIQHVLE (76 aa). Residues 119-139 form a helical membrane-spanning segment; sequence AVHVYSGLPWWGTIAATTILI. The Mitochondrial matrix portion of the chain corresponds to 140 to 199; sequence RCLMFPLYVKSSDTVARNSHIKPELDALNNKLMSTTDLQQGQLVAMQRKKLLSSHGIKNR. Residues 200 to 220 form a helical membrane-spanning segment; the sequence is WLAAPMLQIPIALGFFNALRH. Residues 221–239 are Mitochondrial intermembrane-facing; sequence MANYPVDGFANQGVAWFTD. A helical membrane pass occupies residues 240-260; the sequence is LTQADPYLGLQVITAAVFISF. Over 261–275 the chain is Mitochondrial matrix; the sequence is TRLGGETGAQQFSSP. Residues 276–292 form a helical membrane-spanning segment; that stretch reads MKRLFTILPIISIPATM. The Mitochondrial intermembrane portion of the chain corresponds to 293–297; it reads NLSSA. A helical membrane pass occupies residues 298 to 316; sequence VVLYFAFNGAFSVLQTMIL. Residues 317–402 are Mitochondrial matrix-facing; sequence RNKWVRSKLK…HKSNFINNKK (86 aa). A compositionally biased stretch (basic and acidic residues) spans 366-385; it reads RQLMQDNEKKLQESFKEKRQ. A disordered region spans residues 366 to 386; it reads RQLMQDNEKKLQESFKEKRQN.

Belongs to the OXA1/ALB3/YidC family. Interacts with the large ribosome subunit of mitochondrial ribosome. Interacts directly with MRP20. Interacts with OXA1.

It is found in the mitochondrion inner membrane. In terms of biological role, mitochondrial inner membrane insertase that mediates the insertion of both mitochondrion-encoded precursors and nuclear-encoded proteins from the matrix into the inner membrane. Links mitoribosomes with the inner membrane. Forms pores capable of accommodating translocating protein segments. Essential for the activity and assembly of cytochrome c oxidase. Plays a central role in the translocation and export of the N-terminal part of the COX2 protein into the mitochondrial intermembrane space. In Saccharomyces cerevisiae (strain ATCC 204508 / S288c) (Baker's yeast), this protein is Mitochondrial inner membrane protein OXA1.